We begin with the raw amino-acid sequence, 467 residues long: Chromosomal replication initiator protein DnaA (467 aa).

The interval methionine 1–alanine 90 is domain I, interacts with DnaA modulators. The segment at valine 91–serine 130 is domain II. Residues proline 98 to proline 111 show a composition bias toward low complexity. The interval proline 98–asparagine 119 is disordered. A domain III, AAA+ region region spans residues asparagine 131–alanine 347. Residues glycine 175, glycine 177, lysine 178, and threonine 179 each coordinate ATP. The segment at asparagine 348 to serine 467 is domain IV, binds dsDNA.

It belongs to the DnaA family. In terms of assembly, oligomerizes as a right-handed, spiral filament on DNA at oriC.

Its subcellular location is the cytoplasm. Its function is as follows. Plays an essential role in the initiation and regulation of chromosomal replication. ATP-DnaA binds to the origin of replication (oriC) to initiate formation of the DNA replication initiation complex once per cell cycle. Binds the DnaA box (a 9 base pair repeat at the origin) and separates the double-stranded (ds)DNA. Forms a right-handed helical filament on oriC DNA; dsDNA binds to the exterior of the filament while single-stranded (ss)DNA is stabiized in the filament's interior. The ATP-DnaA-oriC complex binds and stabilizes one strand of the AT-rich DNA unwinding element (DUE), permitting loading of DNA polymerase. After initiation quickly degrades to an ADP-DnaA complex that is not apt for DNA replication. Binds acidic phospholipids. In Shigella boydii serotype 4 (strain Sb227), this protein is Chromosomal replication initiator protein DnaA.